A 317-amino-acid polypeptide reads, in one-letter code: Periplasmic [NiFe] hydrogenase small subunit 1 (317 aa).

Residues 1-49 (MRFSVGLGKEGAEERLARRGVSRRDFLKFCTAIAVTMGMGPAFAPEVAR) constitute a signal peptide (tat-type signal). [4Fe-4S] cluster contacts are provided by Cys67, Cys70, Cys164, Cys200, His238, Cys241, Cys266, and Cys272. [3Fe-4S] cluster is bound by residues Cys281, Cys299, and Cys302.

The protein belongs to the [NiFe]/[NiFeSe] hydrogenase small subunit family. Heterodimer of a large and a small subunit. [3Fe-4S] cluster is required as a cofactor. Requires [4Fe-4S] cluster as cofactor. Post-translationally, predicted to be exported by the Tat system. The position of the signal peptide cleavage has not been experimentally proven.

It is found in the periplasm. It carries out the reaction 2 Fe(III)-[cytochrome c3] + H2 = 2 Fe(II)-[cytochrome c3] + 2 H(+). This chain is Periplasmic [NiFe] hydrogenase small subunit 1 (hynB1), found in Nitratidesulfovibrio vulgaris (strain ATCC 29579 / DSM 644 / CCUG 34227 / NCIMB 8303 / VKM B-1760 / Hildenborough) (Desulfovibrio vulgaris).